Reading from the N-terminus, the 265-residue chain is DNA-binding dual transcriptional regulator Rns (265 aa).

The decanoate site is built by H20 and R75. The HTH araC/xylS-type domain occupies 164–261 (DKVRNLIEKD…GVTPKQFFTY (98 aa)). DNA-binding regions (H-T-H motif) lie at residues 181–202 (GIIADAFNASEITIRKRLESEN) and 228–251 (ISQISNMIGISSASYFIRIFNKHY).

As to quaternary structure, homodimer; each subunit binds one decanoate molecule.

The protein localises to the cytoplasm. Its activity is regulated as follows. Rns-dependent expression of pilins and outer membrane proteins CexE-alpha and CexE-epsilon are inhibited in vivo by decanoic acid (decanoate); has no effect on expression of DnaK or flagellins. Decanoate relieves Rns-dependent repression of nlpA. Functionally, a transcription factor required for the expression of the CS1 and CS2 adhesins of enterotoxigenic E.coli. Required for expression of pilins and some outer membrane lipoproteins. Represses expression of nlpA. In Escherichia coli, this protein is DNA-binding dual transcriptional regulator Rns.